The sequence spans 314 residues: Hydroxyethylthiazole kinase (314 aa).

Met-70 provides a ligand contact to substrate. ATP is bound by residues Arg-145 and Ser-217. Gly-244 contributes to the substrate binding site.

Belongs to the Thz kinase family. Mg(2+) serves as cofactor.

The enzyme catalyses 5-(2-hydroxyethyl)-4-methylthiazole + ATP = 4-methyl-5-(2-phosphooxyethyl)-thiazole + ADP + H(+). The protein operates within cofactor biosynthesis; thiamine diphosphate biosynthesis; 4-methyl-5-(2-phosphoethyl)-thiazole from 5-(2-hydroxyethyl)-4-methylthiazole: step 1/1. Its function is as follows. Catalyzes the phosphorylation of the hydroxyl group of 4-methyl-5-beta-hydroxyethylthiazole (THZ). The protein is Hydroxyethylthiazole kinase of Bifidobacterium longum (strain DJO10A).